The sequence spans 153 residues: Large ribosomal subunit protein uL15 (153 aa).

The tract at residues 21–41 (RGIGSGKGKTGGRGIKGQKSR) is disordered. The segment covering 23–35 (IGSGKGKTGGRGI) has biased composition (gly residues).

Belongs to the universal ribosomal protein uL15 family. As to quaternary structure, part of the 50S ribosomal subunit.

Binds to the 23S rRNA. This is Large ribosomal subunit protein uL15 from Rickettsia felis (strain ATCC VR-1525 / URRWXCal2) (Rickettsia azadi).